The following is a 655-amino-acid chain: Fructose-1,6-bisphosphatase class 3 (655 aa).

Belongs to the FBPase class 3 family. Mn(2+) serves as cofactor.

The enzyme catalyses beta-D-fructose 1,6-bisphosphate + H2O = beta-D-fructose 6-phosphate + phosphate. Its pathway is carbohydrate biosynthesis; gluconeogenesis. The sequence is that of Fructose-1,6-bisphosphatase class 3 from Porphyromonas gingivalis (strain ATCC 33277 / DSM 20709 / CIP 103683 / JCM 12257 / NCTC 11834 / 2561).